The primary structure comprises 254 residues: Ciliary microtubule associated protein 1A (254 aa).

2 STPGR repeats span residues 180–205 (PGPAAYRQTDVRVTKFKAPQYTMAAR) and 216–241 (PGPGAHSPEKVTLTKPCAPVVTFGIK). A disordered region spans residues 207–226 (EPPGDKTLKPGPGAHSPEKV).

This sequence belongs to the CIMAP family. As to quaternary structure, microtubule inner protein component of sperm flagellar doublet microtubules. As to expression, testis-specific.

It localises to the cytoplasm. The protein localises to the cytoskeleton. The protein resides in the flagellum axoneme. Functionally, outer dense fibers are filamentous structures located on the outside of the axoneme in the midpiece and principal piece of the mammalian sperm tail. May help to maintain the passive elastic structures and elastic recoil of the sperm tail. The chain is Ciliary microtubule associated protein 1A from Homo sapiens (Human).